Consider the following 300-residue polypeptide: MAATAISSLSFPALGQSDKISNFASSRPLASAIRICTKFSRLSLNSRSTSKSLIHCMSNVTADVPPVSETKSKFLKAYKRPIPSIYNTVLQELIVQQHLMRYKKTYRYDPVFALGFVTVYDQLMEGYPSDQDRDAIFKAYIEALNEDPKQYRIDAQKMEEWARSQTSASLVDFSSKEGDIEAVLKDIAGRAGSKEGFSYSRFFAVGLFRLLELASATDPTVLDKLCASLNINKKSVDRDLDVYRNLLSKLVQAKELLKEYVEREKKKQGERAQSQKANETISKCLGDTLYNPSFLVERKS.

Residues 1 to 67 (MAATAISSLS…SNVTADVPPV (67 aa)) constitute a chloroplast transit peptide. Residues 68 to 196 (SETKSKFLKA…IAGRAGSKEG (129 aa)) lie on the Chloroplast intermembrane side of the membrane. Residues 197–219 (FSYSRFFAVGLFRLLELASATDP) traverse the membrane as a helical segment. At 220-300 (TVLDKLCASL…NPSFLVERKS (81 aa)) the chain is on the cytoplasmic side. Positions 239-268 (DLDVYRNLLSKLVQAKELLKEYVEREKKKQ) form a coiled coil.

Belongs to the THF1 family. Interacts with GPA1. In terms of tissue distribution, ubiquitous. Present at higher level in hypocotyls (at protein level). Ubiquitously expressed in all organs, in roots of both light-grown and dark-grown seedlings. Highly expressed in the root apical meristems.

It localises to the plastid. It is found in the chloroplast outer membrane. The protein localises to the chloroplast stroma. In terms of biological role, involved in a dynamic process of vesicle-mediated thylakoid membrane biogenesis. Required for the normal organization of vesicles into mature thylakoid stacks and ultimately for leaf development. Also involved in a sugar-signaling mechanism in roots by mediating signaling between the plasma membrane and the plastid. Probably acts downstream of the plasma membrane-delimited heterotrimeric G-protein GPA1 in a D-glucose signaling pathway. The chain is Protein THYLAKOID FORMATION 1, chloroplastic (THF1) from Arabidopsis thaliana (Mouse-ear cress).